Consider the following 493-residue polypeptide: Probable cytosol aminopeptidase (493 aa).

Mn(2+) contacts are provided by K257 and D262. Residue K269 is part of the active site. Mn(2+)-binding residues include D281, D341, and E343. R345 is an active-site residue.

It belongs to the peptidase M17 family. The cofactor is Mn(2+).

It localises to the cytoplasm. The catalysed reaction is Release of an N-terminal amino acid, Xaa-|-Yaa-, in which Xaa is preferably Leu, but may be other amino acids including Pro although not Arg or Lys, and Yaa may be Pro. Amino acid amides and methyl esters are also readily hydrolyzed, but rates on arylamides are exceedingly low.. The enzyme catalyses Release of an N-terminal amino acid, preferentially leucine, but not glutamic or aspartic acids.. Functionally, presumably involved in the processing and regular turnover of intracellular proteins. Catalyzes the removal of unsubstituted N-terminal amino acids from various peptides. In Synechococcus sp. (strain WH7803), this protein is Probable cytosol aminopeptidase.